We begin with the raw amino-acid sequence, 217 residues long: GTP cyclohydrolase 1 (217 aa).

Positions 109, 112, and 180 each coordinate Zn(2+).

This sequence belongs to the GTP cyclohydrolase I family. As to quaternary structure, toroid-shaped homodecamer, composed of two pentamers of five dimers.

The enzyme catalyses GTP + H2O = 7,8-dihydroneopterin 3'-triphosphate + formate + H(+). It functions in the pathway cofactor biosynthesis; 7,8-dihydroneopterin triphosphate biosynthesis; 7,8-dihydroneopterin triphosphate from GTP: step 1/1. In Vibrio cholerae serotype O1 (strain ATCC 39315 / El Tor Inaba N16961), this protein is GTP cyclohydrolase 1.